A 218-amino-acid polypeptide reads, in one-letter code: Large ribosomal subunit protein bL25 (218 aa).

2 disordered regions span residues 1–20 (MKTH…GPAR) and 185–218 (PTAA…ASEE). Acidic residues predominate over residues 192 to 218 (EEGEEGEEGEEGGEGGEAEGAEAASEE).

Belongs to the bacterial ribosomal protein bL25 family. CTC subfamily. As to quaternary structure, part of the 50S ribosomal subunit; part of the 5S rRNA/L5/L18/L25 subcomplex. Contacts the 5S rRNA. Binds to the 5S rRNA independently of L5 and L18.

In terms of biological role, this is one of the proteins that binds to the 5S RNA in the ribosome where it forms part of the central protuberance. The polypeptide is Large ribosomal subunit protein bL25 (Desulfatibacillum aliphaticivorans).